Consider the following 256-residue polypeptide: Hydroxyacylglutathione hydrolase (256 aa).

Residues histidine 57, histidine 59, aspartate 61, histidine 62, histidine 115, aspartate 134, and histidine 172 each contribute to the Zn(2+) site.

It belongs to the metallo-beta-lactamase superfamily. Glyoxalase II family. Monomer. It depends on Zn(2+) as a cofactor.

The catalysed reaction is an S-(2-hydroxyacyl)glutathione + H2O = a 2-hydroxy carboxylate + glutathione + H(+). It participates in secondary metabolite metabolism; methylglyoxal degradation; (R)-lactate from methylglyoxal: step 2/2. Thiolesterase that catalyzes the hydrolysis of S-D-lactoyl-glutathione to form glutathione and D-lactic acid. This chain is Hydroxyacylglutathione hydrolase, found in Rhodospirillum rubrum (strain ATCC 11170 / ATH 1.1.1 / DSM 467 / LMG 4362 / NCIMB 8255 / S1).